A 711-amino-acid polypeptide reads, in one-letter code: Zinc finger protein 175 (711 aa).

Positions 1–11 (MPADVNLSQKP) are enriched in polar residues. A disordered region spans residues 1-21 (MPADVNLSQKPQVLGPEKQDG). The region spanning 27-98 (VSFEDVTVDF…EAEVSHQRCQ (72 aa)) is the KRAB domain. A C2H2-type 1; atypical zinc finger spans residues 279–301 (DGCSECGGSFTQKSHLFAQQRIH). A C2H2-type 2; atypical zinc finger spans residues 307–329 (HECGKCGKAFMPQLKLSVYLTDH). A C2H2-type 3 zinc finger spans residues 335–357 (CICKECGKVFIQRSELLTHQKTH). Residues 359-362 (RKKP) carry the Nuclear localization signal motif. 12 consecutive C2H2-type zinc fingers follow at residues 363–385 (YKCH…QRTH), 391–413 (YECS…QKIH), 419–441 (YACS…QRIH), 447–469 (YVCI…QRSH), 475–497 (YQCH…HRIH), 503–525 (YECS…QKIH), 531–553 (HVCS…QRIH), 559–581 (YKCS…QRIH), 587–609 (YVCT…QITH), 615–637 (FVCY…QRTH), 643–665 (YECL…QRIH), and 671–693 (YVCS…QTTH).

This sequence belongs to the krueppel C2H2-type zinc-finger protein family. As to expression, ubiquitous.

The protein resides in the cytoplasm. It localises to the nucleus. Functionally, down-regulates the expression of several chemokine receptors. Interferes with HIV-1 replication by suppressing Tat-induced viral LTR promoter activity. This Homo sapiens (Human) protein is Zinc finger protein 175 (ZNF175).